The chain runs to 153 residues: Cytochrome c-type biogenesis protein CcmE (153 aa).

Residues 1-8 (MTTRRGRR) are Cytoplasmic-facing. A helical; Signal-anchor for type II membrane protein membrane pass occupies residues 9–29 (ALLIAGGVGLLALAAALVLNA). Residues 30-153 (LRSNLVFFFS…PSATLQTEAR (124 aa)) lie on the Periplasmic side of the membrane. Residues histidine 124 and tyrosine 128 each contribute to the heme site.

Belongs to the CcmE/CycJ family.

Its subcellular location is the cell inner membrane. In terms of biological role, heme chaperone required for the biogenesis of c-type cytochromes. Transiently binds heme delivered by CcmC and transfers the heme to apo-cytochromes in a process facilitated by CcmF and CcmH. This Bordetella parapertussis (strain 12822 / ATCC BAA-587 / NCTC 13253) protein is Cytochrome c-type biogenesis protein CcmE.